A 128-amino-acid chain; its full sequence is Probable cystatin-15 (128 aa).

Positions 1 to 20 are cleaved as a signal peptide; it reads MFWKLPLLLGLLALGPHVCS. Cysteine 82 and cysteine 92 are oxidised to a cystine. Asparagine 104 is a glycosylation site (N-linked (GlcNAc...) asparagine). Cysteine 105 and cysteine 125 are oxidised to a cystine.

The protein belongs to the cystatin family.

It localises to the secreted. The protein is Probable cystatin-15 of Bos taurus (Bovine).